The following is a 340-amino-acid chain: Dihydroorotate dehydrogenase (quinone) (340 aa).

FMN is bound by residues 65-69 (AGADK) and Thr89. Residue Lys69 coordinates substrate. A substrate-binding site is contributed by 114 to 118 (NRNGF). Positions 142 and 175 each coordinate FMN. Residue Asn175 coordinates substrate. Ser178 acts as the Nucleophile in catalysis. Asn180 is a substrate binding site. Residues Lys220 and Thr248 each coordinate FMN. 249-250 (NT) is a binding site for substrate. FMN contacts are provided by residues Gly271, Gly300, and 321–322 (YS).

It belongs to the dihydroorotate dehydrogenase family. Type 2 subfamily. Monomer. FMN is required as a cofactor.

It localises to the cell membrane. It catalyses the reaction (S)-dihydroorotate + a quinone = orotate + a quinol. Its pathway is pyrimidine metabolism; UMP biosynthesis via de novo pathway; orotate from (S)-dihydroorotate (quinone route): step 1/1. Functionally, catalyzes the conversion of dihydroorotate to orotate with quinone as electron acceptor. The sequence is that of Dihydroorotate dehydrogenase (quinone) from Actinobacillus succinogenes (strain ATCC 55618 / DSM 22257 / CCUG 43843 / 130Z).